A 503-amino-acid polypeptide reads, in one-letter code: MEIRAEEISEIIRKQIKEYGKEVEVAETGTIISVGDGIARIHGLDKAMAGELLEFPGGVSGMVLNLEEDNVGAAILGEDNENIKEGTTVKRTGRIVEVPVGEALIGRVVNAIGQPIDGKGPINTSTFGKVEVKAPGIVKRKSVHQPMQTGLKAIDAMVPVGRGQRELIIGDRQTGKTAVAIDTIINQKGGDLICIYVAIGQKRSTVAQVVSKLQEHGAMDYTIIVSASASEPAPLQFIAPYTGVTMGEYFRDNGKHALIIYDDLSKQAVAYRQLSLLLRRPPGREAYPGDVFYLHSRLLERAAKLSDDCGAGSLTALPIIETQAGDVSAYIPTNVISITDGQIYLESDLFYSGVRPAINVGLSVSRVGGSAQVKAMKQVAGTLRLNLAQYREMAAFAQFGSDLDKATQMQLARGERLVEILKQPQYRPIPNEKQVLIIFAANNGYVDDYPVASLRRYESELYSFFDGRKADILAELRDKKAIDDDLKGKIVAALDEFKKEFTA.

170–177 (GDRQTGKT) is a binding site for ATP.

The protein belongs to the ATPase alpha/beta chains family. F-type ATPases have 2 components, CF(1) - the catalytic core - and CF(0) - the membrane proton channel. CF(1) has five subunits: alpha(3), beta(3), gamma(1), delta(1), epsilon(1). CF(0) has three main subunits: a(1), b(2) and c(9-12). The alpha and beta chains form an alternating ring which encloses part of the gamma chain. CF(1) is attached to CF(0) by a central stalk formed by the gamma and epsilon chains, while a peripheral stalk is formed by the delta and b chains.

The protein resides in the cell inner membrane. The enzyme catalyses ATP + H2O + 4 H(+)(in) = ADP + phosphate + 5 H(+)(out). Its function is as follows. Produces ATP from ADP in the presence of a proton gradient across the membrane. The alpha chain is a regulatory subunit. This Geobacter metallireducens (strain ATCC 53774 / DSM 7210 / GS-15) protein is ATP synthase subunit alpha.